Here is a 186-residue protein sequence, read N- to C-terminus: Ribosome-recycling factor (186 aa).

The protein belongs to the RRF family.

It is found in the cytoplasm. Its function is as follows. Responsible for the release of ribosomes from messenger RNA at the termination of protein biosynthesis. May increase the efficiency of translation by recycling ribosomes from one round of translation to another. The polypeptide is Ribosome-recycling factor (Janthinobacterium sp. (strain Marseille) (Minibacterium massiliensis)).